Reading from the N-terminus, the 358-residue chain is MLFKEAQAFIENMYKECHYETQIINKRLHDIELEIKETGTYTHTEEELIYGAKMAWRNSNRCIGRLFWDSLNVIDARDVTDEASFLSSITYHITQATNEGKLKPYITIYAPKDGPKIFNNQLIRYAGYDNCGDPAEKEVTRLANHLGWKGKGTNFDVLPLIYQLPNESVKFYEYPTSLIKEVPIEHNHYPKLRKLNLKWYAVPIISNMDLKIGGIVYPTAPFNGWYMVTEIGVRNFIDDYRYNLLEKVADAFEFDTLKNNSFNKDRALVELNYAVYHSFKKEGVSIVDHLTAAKQFELFERNEAQQGRQVTGKWSWLAPPLSPTLTSNYHHGYDNTVKDPNFFYKKKESNANQCPFHH.

Cys62 contacts heme.

The protein belongs to the NOS family. Bacterial NOS oxygenase subfamily. As to quaternary structure, homodimer. Heme is required as a cofactor. It depends on (6S)-5,6,7,8-tetrahydrofolate as a cofactor.

The enzyme catalyses 3 reduced [flavodoxin] + 2 L-arginine + 4 O2 = 3 oxidized [flavodoxin] + 2 L-citrulline + 2 nitric oxide + 4 H2O + 5 H(+). Its function is as follows. Catalyzes the production of nitric oxide. In Staphylococcus aureus (strain COL), this protein is Nitric oxide synthase oxygenase (nos).